An 86-amino-acid chain; its full sequence is Exodeoxyribonuclease 7 small subunit (86 aa).

The interval 1–27 (MQDELFETEKIPPKNTKNAKNAPKKSF) is disordered.

The protein belongs to the XseB family. Heterooligomer composed of large and small subunits.

The protein localises to the cytoplasm. It catalyses the reaction Exonucleolytic cleavage in either 5'- to 3'- or 3'- to 5'-direction to yield nucleoside 5'-phosphates.. Bidirectionally degrades single-stranded DNA into large acid-insoluble oligonucleotides, which are then degraded further into small acid-soluble oligonucleotides. The sequence is that of Exodeoxyribonuclease 7 small subunit from Helicobacter pylori (strain G27).